Consider the following 575-residue polypeptide: Protein NRT1/ PTR FAMILY 5.6 (575 aa).

A run of 2 helical transmembrane segments spans residues 44 to 64 and 88 to 108; these read AALF…GLAT and WSGV…AYLG. Thr112 carries the post-translational modification Phosphothreonine. 10 helical membrane-spanning segments follow: residues 113–133, 153–173, 195–215, 223–243, 339–359, 375–395, 420–440, 457–477, 493–513, and 541–561; these read VLVA…SWFI, VAFF…KPSL, FFNW…TAVA, WGVA…IFFI, LIIN…CATQ, IGGF…TLII, ILQR…IAAL, VIWL…TLVG, LGIA…NLLI, and FYWF…IVAK.

It belongs to the major facilitator superfamily. Proton-dependent oligopeptide transporter (POT/PTR) (TC 2.A.17) family. In terms of tissue distribution, expressed in stems, shoots, leaves, flowers and siliques.

The protein resides in the membrane. In Arabidopsis thaliana (Mouse-ear cress), this protein is Protein NRT1/ PTR FAMILY 5.6 (NPF5.6).